Consider the following 585-residue polypeptide: Dihydroxy-acid dehydratase, mitochondrial (585 aa).

The N-terminal 20 residues, 1 to 20 (MGLLTKVATSRQFSTTRCVA), are a transit peptide targeting the mitochondrion. C70 is a [2Fe-2S] cluster binding site. A Mg(2+)-binding site is contributed by D102. A [2Fe-2S] cluster-binding site is contributed by C143. D144 provides a ligand contact to Mg(2+). Residue C221 coordinates [2Fe-2S] cluster. Position 474 (E474) interacts with Mg(2+). S500 serves as the catalytic Proton acceptor.

Belongs to the IlvD/Edd family. [2Fe-2S] cluster is required as a cofactor. Requires Mg(2+) as cofactor.

It localises to the mitochondrion. It catalyses the reaction (2R)-2,3-dihydroxy-3-methylbutanoate = 3-methyl-2-oxobutanoate + H2O. It carries out the reaction (2R,3R)-2,3-dihydroxy-3-methylpentanoate = (S)-3-methyl-2-oxopentanoate + H2O. The protein operates within amino-acid biosynthesis; L-isoleucine biosynthesis; L-isoleucine from 2-oxobutanoate: step 3/4. It participates in amino-acid biosynthesis; L-valine biosynthesis; L-valine from pyruvate: step 3/4. Catalytic activity is inactivated under iron-limiting conditions. In terms of biological role, dihydroxyacid dehydratase that catalyzes the third step in the common pathway leading to biosynthesis of branched-chain amino acids. Catalyzes the dehydration of (2R,3R)-2,3-dihydroxy-3-methylpentanoate (2,3-dihydroxy-3-methylvalerate) into 2-oxo-3-methylpentanoate (2-oxo-3-methylvalerate) and of (2R)-2,3-dihydroxy-3-methylbutanoate (2,3-dihydroxyisovalerate) into 2-oxo-3-methylbutanoate (2-oxoisovalerate), the penultimate precursor to L-isoleucine and L-valine, respectively. Required for the synthesis of alpha-isopropylmalate which modulates the activity of LEU3 and subsequently regulates the expression of LEU1. The sequence is that of Dihydroxy-acid dehydratase, mitochondrial from Saccharomyces cerevisiae (strain ATCC 204508 / S288c) (Baker's yeast).